Here is a 526-residue protein sequence, read N- to C-terminus: Peptide chain release factor 3 (526 aa).

The region spanning 8–277 is the tr-type G domain; the sequence is NKRRTFAIIS…GLTEWAPKPQ (270 aa). GTP contacts are provided by residues 17 to 24, 85 to 89, and 139 to 142; these read SHPDAGKT, DTPGH, and NKLD.

This sequence belongs to the TRAFAC class translation factor GTPase superfamily. Classic translation factor GTPase family. PrfC subfamily.

It is found in the cytoplasm. Functionally, increases the formation of ribosomal termination complexes and stimulates activities of RF-1 and RF-2. It binds guanine nucleotides and has strong preference for UGA stop codons. It may interact directly with the ribosome. The stimulation of RF-1 and RF-2 is significantly reduced by GTP and GDP, but not by GMP. The polypeptide is Peptide chain release factor 3 (Haemophilus ducreyi (strain 35000HP / ATCC 700724)).